Reading from the N-terminus, the 210-residue chain is Somatotropin-2 (210 aa).

Residues 1–22 form the signal peptide; that stretch reads MGQVFLLMPVLLVSCFLSQGAA. Residue H38 participates in Zn(2+) binding. A disulfide bridge links C71 with C183. A Zn(2+)-binding site is contributed by E192. A disulfide bridge links C200 with C208.

The protein belongs to the somatotropin/prolactin family.

The protein localises to the secreted. Its function is as follows. Growth hormone plays an important role in growth control and is involved in the regulation of several anabolic processes. Implicated as an osmoregulatory substance important for seawater adaptation. This is Somatotropin-2 (gh2) from Oncorhynchus nerka (Sockeye salmon).